We begin with the raw amino-acid sequence, 352 residues long: V-type ATP synthase subunit C (352 aa).

It belongs to the V-ATPase V0D/AC39 subunit family.

Produces ATP from ADP in the presence of a proton gradient across the membrane. The chain is V-type ATP synthase subunit C (atpC) from Deinococcus radiodurans (strain ATCC 13939 / DSM 20539 / JCM 16871 / CCUG 27074 / LMG 4051 / NBRC 15346 / NCIMB 9279 / VKM B-1422 / R1).